Reading from the N-terminus, the 1286-residue chain is Protein patched (1286 aa).

The Cytoplasmic segment spans residues 1–76 (MDRDSLPRVP…GSSVQKHAGK (76 aa)). A helical membrane pass occupies residues 77–92 (VLFVAILVLSTFCVGL). The Extracellular portion of the chain corresponds to 93–427 (KSAQIHSKVH…DDILAKFSHP (335 aa)). Asn142, Asn298, Asn335, and Asn388 each carry an N-linked (GlcNAc...) asparagine glycan. A helical membrane pass occupies residues 428 to 448 (SALSIVIGVAVTVLYAFCTLL). The 156-residue stretch at 428–583 (SALSIVIGVA…LLVFPAMISL (156 aa)) folds into the SSD domain. Residues 449–465 (RWRDPVRGQSSVGVAGV) are Cytoplasmic-facing. Residues 466-486 (LLMCFSTAAGLGLSALLGIVF) traverse the membrane as a helical segment. The Extracellular portion of the chain corresponds to 487–492 (NAASTQ). A helical transmembrane segment spans residues 493–511 (VVPFLALGLGVDHIFMLTA). The Cytoplasmic segment spans residues 512–532 (AYAESNRREQTKLILKKVGPS). The chain crosses the membrane as a helical span at residues 533 to 553 (ILFSACSTAGSFFAAAFIPVP). The Extracellular portion of the chain corresponds to 554–562 (ALKVFCLQA). The helical transmembrane segment at 563-583 (AIVMCSNLAAALLVFPAMISL) threads the bilayer. Residues 584 to 677 (DLRRRTAGRA…QHYTPFLMRS (94 aa)) are Cytoplasmic-facing. A helical membrane pass occupies residues 678–699 (WVKFLTVMGFLAALISSLYAST). Residues 700–931 (RLQDGLDIID…IRDLSVKYEG (232 aa)) lie on the Extracellular side of the membrane. The N-linked (GlcNAc...) asparagine glycan is linked to Asn807. The helical transmembrane segment at 932-952 (FGLPNYPSGIPFIFWEQYMTL) threads the bilayer. Topologically, residues 953–955 (RSS) are cytoplasmic. Residues 956-976 (LAMILACVLLAALVLVSLLLL) traverse the membrane as a helical segment. Residues 977–1007 (SVWAAVLVILSVLASLAQIFGAMTLLGIKLS) lie on the Extracellular side of the membrane. The chain crosses the membrane as a helical span at residues 1008-1028 (AIPAVILILSVGMMLCFNVLI). Residues 1029 to 1056 (SLGFMTSVGNRQRRVQLSMQMSLGPLVH) are Cytoplasmic-facing. Residues 1057-1077 (GMLTSGVAVFMLSTSPFEFVI) form a helical membrane-spanning segment. Over 1078–1082 (RHFCW) the chain is Extracellular. A helical membrane pass occupies residues 1083-1103 (LLLVVLCVGACNSLLVFPILL). The Cytoplasmic segment spans residues 1104–1286 (SMVGPEAELV…RAVRSYNFTS (183 aa)). A disordered region spans residues 1116 to 1237 (EHPDRISTPS…PPPFPTAYPP (122 aa)). Polar residues-rich tracts occupy residues 1141–1152 (VQGSRSSRGSCQ) and 1165–1191 (PSLTTITEEPQSWKSSNSSIQMPNDWT). Residues 1199 to 1216 (PASYAAPPPAYHKAAAQQ) are compositionally biased toward low complexity. Positions 1224-1235 (PTTPPPPFPTAY) are enriched in pro residues.

The protein belongs to the patched family. As to quaternary structure, interacts (via C-terminal cytoplasmic region) with CG5504/l(2)tid; the interaction is probably direct. Interacts with hh/hedgehog.

The protein resides in the membrane. Functionally, segmentation polarity protein. Acts as a receptor for the hedgehog protein (hh). Associates with the smoothened protein (SMO) to transduce the hedgehog signal leading to the activation of wingless, decapentaplegic and patched itself. Participates in cell interactions that establish pattern within the segment and the imaginal disks during development. In the absence of HH, represses the constitutive signaling activity of smo through fused (FU). The sequence is that of Protein patched from Drosophila melanogaster (Fruit fly).